A 306-amino-acid chain; its full sequence is Porphobilinogen deaminase (306 aa).

Cys239 carries the post-translational modification S-(dipyrrolylmethanemethyl)cysteine.

Belongs to the HMBS family. In terms of assembly, monomer. Dipyrromethane is required as a cofactor.

The catalysed reaction is 4 porphobilinogen + H2O = hydroxymethylbilane + 4 NH4(+). It functions in the pathway porphyrin-containing compound metabolism; protoporphyrin-IX biosynthesis; coproporphyrinogen-III from 5-aminolevulinate: step 2/4. Tetrapolymerization of the monopyrrole PBG into the hydroxymethylbilane pre-uroporphyrinogen in several discrete steps. The chain is Porphobilinogen deaminase from Helicobacter pylori (strain Shi470).